Consider the following 123-residue polypeptide: MKEVTAVVRPNKMSVTKDALDKIGYRRMTAIPVLGKGKQRGISGELNFYIQPKLLAKRYSTGMKYIPKRLLSIVVNDEDVDQVIKTIIGVNQTAQIGDGKIFVESIDEVIRIRTGEKGELALK.

It belongs to the P(II) protein family.

Functionally, could be involved in the regulation of nitrogen fixation. The chain is Nitrogen fixation nifHD1 region GlnB-like protein 2 (glnBB) from Methanosarcina barkeri.